A 132-amino-acid chain; its full sequence is Fluoride-specific ion channel FluC (132 aa).

The next 4 membrane-spanning stretches (helical) occupy residues 5–25 (LVAIGAGAALGANLRWLLGMW), 36–56 (GTLAANWLGAWLIGIAIALFA), 68–88 (FVVTGFLGALTTFSTFSAEMF), and 103–123 (IAVHVAGSLAMTGLGIATFGA). 2 residues coordinate Na(+): G75 and T78.

Belongs to the fluoride channel Fluc/FEX (TC 1.A.43) family.

Its subcellular location is the cell inner membrane. It catalyses the reaction fluoride(in) = fluoride(out). With respect to regulation, na(+) is not transported, but it plays an essential structural role and its presence is essential for fluoride channel function. Functionally, fluoride-specific ion channel. Important for reducing fluoride concentration in the cell, thus reducing its toxicity. The polypeptide is Fluoride-specific ion channel FluC (Chromohalobacter salexigens (strain ATCC BAA-138 / DSM 3043 / CIP 106854 / NCIMB 13768 / 1H11)).